The primary structure comprises 141 residues: Cholinesterase (141 aa).

N-linked (GlcNAc...) asparagine glycosylation occurs at Asn-39. 49 to 50 (GG) is a binding site for substrate. Ser-131 functions as the Acyl-ester intermediate in the catalytic mechanism. Position 131 is a phosphoserine (Ser-131).

Belongs to the type-B carboxylesterase/lipase family. Homotetramer; disulfide-linked. Dimer of dimers. As to expression, present in most cells except erythrocytes.

The protein resides in the secreted. The enzyme catalyses an acylcholine + H2O = a carboxylate + choline + H(+). In terms of biological role, esterase with broad substrate specificity. Contributes to the inactivation of the neurotransmitter acetylcholine. Can degrade neurotoxic organophosphate esters. The polypeptide is Cholinesterase (BCHE) (Canis lupus familiaris (Dog)).